We begin with the raw amino-acid sequence, 574 residues long: uncharacterized protein (574 aa).

A disordered region spans residues Ser-297–Ser-327. Residues Ala-313 to Ser-327 are compositionally biased toward polar residues.

This is an uncharacterized protein from Macaca fascicularis (Crab-eating macaque).